Here is a 336-residue protein sequence, read N- to C-terminus: Biotin synthase (336 aa).

The Radical SAM core domain occupies 54 to 281 (NAIQLSTLLS…KAMVRLSAGR (228 aa)). Positions 69, 73, and 76 each coordinate [4Fe-4S] cluster. [2Fe-2S] cluster-binding residues include C113, C144, C204, and R276.

It belongs to the radical SAM superfamily. Biotin synthase family. Homodimer. [4Fe-4S] cluster is required as a cofactor. The cofactor is [2Fe-2S] cluster.

It carries out the reaction (4R,5S)-dethiobiotin + (sulfur carrier)-SH + 2 reduced [2Fe-2S]-[ferredoxin] + 2 S-adenosyl-L-methionine = (sulfur carrier)-H + biotin + 2 5'-deoxyadenosine + 2 L-methionine + 2 oxidized [2Fe-2S]-[ferredoxin]. It participates in cofactor biosynthesis; biotin biosynthesis; biotin from 7,8-diaminononanoate: step 2/2. In terms of biological role, catalyzes the conversion of dethiobiotin (DTB) to biotin by the insertion of a sulfur atom into dethiobiotin via a radical-based mechanism. The protein is Biotin synthase of Burkholderia mallei (strain ATCC 23344).